A 512-amino-acid chain; its full sequence is Protein maelstrom homolog (512 aa).

The segment at residues 9 to 75 (AKGPFYFFMM…NPKEAGGYGE (67 aa)) is a DNA-binding region (HMG box). Disordered stretches follow at residues 49–72 (APHE…EAGG), 360–421 (RMSK…GTRA), and 439–465 (QSAN…DPQS). Residues 360 to 370 (RMSKLTTTSDN) show a composition bias toward polar residues. Basic and acidic residues predominate over residues 379–388 (RSTDRTDRDV). Composition is skewed to polar residues over residues 393 to 421 (IYSS…GTRA) and 439 to 449 (QSANRSPTKKN). The span at 451 to 464 (WSRENKLTEVRDPQ) shows a compositional bias: basic and acidic residues.

This sequence belongs to the maelstrom family.

It localises to the cytoplasm. It is found in the nucleus. Its function is as follows. Plays a central role during gametogenesis by repressing transposable elements and preventing their mobilization, which is essential for the germline integrity. Probably acts via the piRNA metabolic process, which mediates the repression of transposable elements during meiosis by forming complexes composed of piRNAs and Piwi proteins and governs the repression of transposons. This is Protein maelstrom homolog (mael) from Culex quinquefasciatus (Southern house mosquito).